The chain runs to 463 residues: Spermidine/putrescine import ATP-binding protein PotA (463 aa).

The ABC transporter domain occupies 10 to 240 (IEVSHVSKFF…PINSFVADFI (231 aa)). Residue 42-49 (GPSGCGKT) coordinates ATP.

It belongs to the ABC transporter superfamily. Spermidine/putrescine importer (TC 3.A.1.11.1) family. As to quaternary structure, the complex is composed of two ATP-binding proteins (PotA), two transmembrane proteins (PotB and PotC) and a solute-binding protein (PotD).

The protein localises to the cell inner membrane. The enzyme catalyses ATP + H2O + polyamine-[polyamine-binding protein]Side 1 = ADP + phosphate + polyamineSide 2 + [polyamine-binding protein]Side 1.. Part of the ABC transporter complex PotABCD involved in spermidine/putrescine import. Responsible for energy coupling to the transport system. This chain is Spermidine/putrescine import ATP-binding protein PotA, found in Bacteroides thetaiotaomicron (strain ATCC 29148 / DSM 2079 / JCM 5827 / CCUG 10774 / NCTC 10582 / VPI-5482 / E50).